A 222-amino-acid chain; its full sequence is Putative fungistatic metabolite (222 aa).

2 consecutive WSC domains span residues 16–110 (AQTY…YGTS) and 127–222 (TTQY…YQWV).

Inhibits the growth of the fungus P.tritici-repentis. The sequence is that of Putative fungistatic metabolite from Chaetomium globosum (strain ATCC 6205 / CBS 148.51 / DSM 1962 / NBRC 6347 / NRRL 1970) (Soil fungus).